We begin with the raw amino-acid sequence, 88 residues long: Kunitz-type kappaPI-theraphotoxin-Hs1d (88 aa).

The first 27 residues, 1 to 27 (MGIARILSAVLFLSVLFVVTFPTLLSA), serve as a signal peptide directing secretion. The propeptide occupies 28–33 (DHHDGR). A BPTI/Kunitz inhibitor domain is found at 37-85 (CRLPSDRGRCKASFERWYFNGTTCTKFVYGGYGGNDNRFPTEKACMKRC). Intrachain disulfides connect Cys37/Cys85 and Cys60/Cys81.

It belongs to the venom Kunitz-type family. 01 (intermediate) subfamily. In terms of tissue distribution, expressed by the venom gland.

The protein resides in the secreted. Serine protease inhibitor that inhibits trypsin at a molar ratio of 1:1. The polypeptide is Kunitz-type kappaPI-theraphotoxin-Hs1d (Cyriopagopus schmidti (Chinese bird spider)).